Reading from the N-terminus, the 471-residue chain is L-lysine 2,3-aminomutase (471 aa).

In terms of domain architecture, Radical SAM core spans 120–332; that stretch reads HRYPDRVLFL…GLRGHTSGYA (213 aa). [4Fe-4S] cluster-binding residues include Cys-134, Cys-138, and Cys-141. An N6-(pyridoxal phosphate)lysine modification is found at Lys-346.

The protein belongs to the radical SAM superfamily. KamA family. Homotetramer. The cofactor is [4Fe-4S] cluster. Pyridoxal 5'-phosphate is required as a cofactor.

It carries out the reaction L-lysine = (3S)-3,6-diaminohexanoate. It functions in the pathway amino-acid degradation; L-lysine degradation via acetate pathway. Functionally, catalyzes the interconversion of L-alpha-lysine and L-beta-lysine. The chain is L-lysine 2,3-aminomutase (kamA) from Bacillus subtilis (strain 168).